A 493-amino-acid polypeptide reads, in one-letter code: UDP-N-acetylmuramate--L-alanine ligase (493 aa).

Gly126–Thr132 contacts ATP.

Belongs to the MurCDEF family.

The protein localises to the cytoplasm. The catalysed reaction is UDP-N-acetyl-alpha-D-muramate + L-alanine + ATP = UDP-N-acetyl-alpha-D-muramoyl-L-alanine + ADP + phosphate + H(+). It functions in the pathway cell wall biogenesis; peptidoglycan biosynthesis. Functionally, cell wall formation. This chain is UDP-N-acetylmuramate--L-alanine ligase, found in Hamiltonella defensa subsp. Acyrthosiphon pisum (strain 5AT).